The following is a 316-amino-acid chain: Putative mannose-6-phosphate isomerase YvyI (316 aa).

Zn(2+) contacts are provided by His98, Glu116, and His173. Residue Arg193 is part of the active site.

This sequence belongs to the mannose-6-phosphate isomerase type 1 family. It depends on Zn(2+) as a cofactor.

It catalyses the reaction D-mannose 6-phosphate = D-fructose 6-phosphate. This Bacillus subtilis (strain 168) protein is Putative mannose-6-phosphate isomerase YvyI (yvyI).